A 164-amino-acid chain; its full sequence is Terminase, small subunit (164 aa).

The interval 1 to 35 is helix-turn-helix (HTH); sequence MEGLDINKLLDISDLPGIDGEEIKVYEPLQLVEVK. The interval 1–35 is interaction with gp17; the sequence is MEGLDINKLLDISDLPGIDGEEIKVYEPLQLVEVK. The oligomerization stretch occupies residues 36 to 114; that stretch reads SNPQNRTPDL…KDMKDITSEQ (79 aa). The interaction with gp17 stretch occupies residues 115-164; that stretch reads VGTKGAVPTGQMNIQNATVFMGSPTELMDEIGDAYEAQEAREKVINGTTD.

Homooctamer. Interacts with the terminase large subunit gp17; the active complex is probably heterooligomeric.

Its function is as follows. The terminase small subunit binds to the packaging initiation site and regulates the ATPase activity of the terminase large subunit. The terminase lies at a unique vertex of the procapsid and is composed of two subunits, a small terminase subunit involved in viral DNA recognition (packaging 'pac' sequence), and a large terminase subunit possessing endonucleolytic and ATPase activities. Both terminase subunits heterooligomerize and are docked on the portal protein to form the packaging machine. The terminase large subunit exhibits endonuclease activity and cleaves the viral genome concatemer once the capsid is full (headful packaging). Once the capsid is packaged with the DNA, the terminase complex is substituted by neck proteins. This chain is Terminase, small subunit (16), found in Enterobacteria phage T4 (Bacteriophage T4).